Consider the following 357-residue polypeptide: Beta-hexosaminidase (357 aa).

Residues D72, R80, R146, and 176 to 177 (KH) each bind substrate. The Proton donor/acceptor role is filled by H189. Residue D260 is the Nucleophile of the active site.

It belongs to the glycosyl hydrolase 3 family. NagZ subfamily.

The protein localises to the cytoplasm. The catalysed reaction is Hydrolysis of terminal non-reducing N-acetyl-D-hexosamine residues in N-acetyl-beta-D-hexosaminides.. Its pathway is cell wall biogenesis; peptidoglycan recycling. In terms of biological role, plays a role in peptidoglycan recycling by cleaving the terminal beta-1,4-linked N-acetylglucosamine (GlcNAc) from peptide-linked peptidoglycan fragments, giving rise to free GlcNAc, anhydro-N-acetylmuramic acid and anhydro-N-acetylmuramic acid-linked peptides. The chain is Beta-hexosaminidase from Hydrogenovibrio crunogenus (strain DSM 25203 / XCL-2) (Thiomicrospira crunogena).